The sequence spans 23 residues: GINTLKKVIQGLHEVIKLVSNHE.

Expressed by the skin glands.

Its subcellular location is the secreted. Functionally, possesses antifungal activity against C.albicans and is also active against E.coli and S.aureus. The sequence is that of Pseudin-3 from Pseudis paradoxa (Paradoxical frog).